A 371-amino-acid chain; its full sequence is Chorismate synthase (371 aa).

Positions 48 and 54 each coordinate NADP(+). Residues 132 to 134 (RSS), 244 to 245 (NA), Gly289, 304 to 308 (KPTSS), and Arg330 contribute to the FMN site.

The protein belongs to the chorismate synthase family. In terms of assembly, homotetramer. FMNH2 is required as a cofactor.

It catalyses the reaction 5-O-(1-carboxyvinyl)-3-phosphoshikimate = chorismate + phosphate. It functions in the pathway metabolic intermediate biosynthesis; chorismate biosynthesis; chorismate from D-erythrose 4-phosphate and phosphoenolpyruvate: step 7/7. In terms of biological role, catalyzes the anti-1,4-elimination of the C-3 phosphate and the C-6 proR hydrogen from 5-enolpyruvylshikimate-3-phosphate (EPSP) to yield chorismate, which is the branch point compound that serves as the starting substrate for the three terminal pathways of aromatic amino acid biosynthesis. This reaction introduces a second double bond into the aromatic ring system. The sequence is that of Chorismate synthase from Methylobacterium nodulans (strain LMG 21967 / CNCM I-2342 / ORS 2060).